A 99-amino-acid chain; its full sequence is Aspartyl/glutamyl-tRNA(Asn/Gln) amidotransferase subunit C (99 aa).

It belongs to the GatC family. Heterotrimer of A, B and C subunits.

The enzyme catalyses L-glutamyl-tRNA(Gln) + L-glutamine + ATP + H2O = L-glutaminyl-tRNA(Gln) + L-glutamate + ADP + phosphate + H(+). It carries out the reaction L-aspartyl-tRNA(Asn) + L-glutamine + ATP + H2O = L-asparaginyl-tRNA(Asn) + L-glutamate + ADP + phosphate + 2 H(+). Functionally, allows the formation of correctly charged Asn-tRNA(Asn) or Gln-tRNA(Gln) through the transamidation of misacylated Asp-tRNA(Asn) or Glu-tRNA(Gln) in organisms which lack either or both of asparaginyl-tRNA or glutaminyl-tRNA synthetases. The reaction takes place in the presence of glutamine and ATP through an activated phospho-Asp-tRNA(Asn) or phospho-Glu-tRNA(Gln). The sequence is that of Aspartyl/glutamyl-tRNA(Asn/Gln) amidotransferase subunit C from Mycobacterium marinum (strain ATCC BAA-535 / M).